Consider the following 430-residue polypeptide: Histidine--tRNA ligase (430 aa).

It belongs to the class-II aminoacyl-tRNA synthetase family. In terms of assembly, homodimer.

It localises to the cytoplasm. The enzyme catalyses tRNA(His) + L-histidine + ATP = L-histidyl-tRNA(His) + AMP + diphosphate + H(+). The protein is Histidine--tRNA ligase of Acinetobacter baylyi (strain ATCC 33305 / BD413 / ADP1).